We begin with the raw amino-acid sequence, 92 residues long: Large ribosomal subunit protein bL28 (92 aa).

It belongs to the bacterial ribosomal protein bL28 family.

The chain is Large ribosomal subunit protein bL28 from Borreliella afzelii (strain PKo) (Borrelia afzelii).